A 1097-amino-acid chain; its full sequence is DNA-directed RNA polymerase subunit beta (1097 aa).

The disordered stretch occupies residues 1072 to 1097 (QDINPRRNTPSRPTYESLGTSEYEED). The span at 1077 to 1091 (RRNTPSRPTYESLGT) shows a compositional bias: polar residues.

Belongs to the RNA polymerase beta chain family. As to quaternary structure, in cyanobacteria the RNAP catalytic core is composed of 2 alpha, 1 beta, 1 beta', 1 gamma and 1 omega subunit. When a sigma factor is associated with the core the holoenzyme is formed, which can initiate transcription.

The catalysed reaction is RNA(n) + a ribonucleoside 5'-triphosphate = RNA(n+1) + diphosphate. DNA-dependent RNA polymerase catalyzes the transcription of DNA into RNA using the four ribonucleoside triphosphates as substrates. This Prochlorococcus marinus (strain MIT 9301) protein is DNA-directed RNA polymerase subunit beta.